Consider the following 397-residue polypeptide: Acetate kinase (397 aa).

Residue N8 participates in Mg(2+) binding. K15 contributes to the ATP binding site. R89 lines the substrate pocket. The active-site Proton donor/acceptor is the D146. ATP contacts are provided by residues H206–G210, D281–R283, and G328–N332. Residue E381 participates in Mg(2+) binding.

This sequence belongs to the acetokinase family. As to quaternary structure, homodimer. Mg(2+) serves as cofactor. It depends on Mn(2+) as a cofactor.

The protein localises to the cytoplasm. The catalysed reaction is acetate + ATP = acetyl phosphate + ADP. It functions in the pathway metabolic intermediate biosynthesis; acetyl-CoA biosynthesis; acetyl-CoA from acetate: step 1/2. In terms of biological role, catalyzes the formation of acetyl phosphate from acetate and ATP. Can also catalyze the reverse reaction. This Oceanobacillus iheyensis (strain DSM 14371 / CIP 107618 / JCM 11309 / KCTC 3954 / HTE831) protein is Acetate kinase.